The chain runs to 330 residues: PDZ and LIM domain protein 4 (330 aa).

The PDZ domain maps to 1–84 (MPHSVTLRGP…HLTLSVSRPE (84 aa)). The segment at 104 to 180 (IDPEIQDGSP…DPARGLPRSR (77 aa)) is disordered. Residues 111-121 (GSPTTSRRPSG) are compositionally biased toward low complexity. Residues Ser-112, Ser-116, Ser-120, and Ser-135 each carry the phosphoserine modification. The segment covering 148-163 (NGSSEATLPAQMSTLH) has biased composition (polar residues). Positions 253–312 (PECTRCGHGIVGTIVKARDKLYHPECFMCSDCGLNLKQRGYFFLDERLYCESHAKARVKP) constitute an LIM zinc-binding domain.

As to quaternary structure, homodimer. Interacts with PTPN13. Interacts (via C-terminus only or via combined C-terminus and LIM domain, but not LIM domain only) with PTPN13 (via the second or fourth PDZ domains). Found in a complex with PTPN13 and TRIP6. Interacts (via PDZ domain) with ACTN1 and ACTN2 (via C-terminal SDL residues). Interacts (via PDZ domain) with TRIP6 (via the second LIM domain or via the third LIM domain plus C-terminus). Interacts (via LIM domain) with GRIA1 (via C-terminus); this interaction as well as the interaction with alpha-actinin is required for their colocalization in early endosomes. Interacts with PDLIM1. Forms (via LIM domain) a heterodimer with PDLIM3. Interacts directly with SRC (via kinase domain and to a lesser extent the SH2 domain). Isoform 2 interacts with NQO1. NQO1-stabilized isoform 2 heterodimerizes with isoform 1. Phosphorylated on tyrosine residue(s). Can be dephosphorylated by PTPN13. As to expression, found in brain.

The protein localises to the cytoplasm. It localises to the cytoskeleton. It is found in the nucleus. The protein resides in the perinuclear region. Its subcellular location is the cell projection. The protein localises to the lamellipodium. It localises to the dendritic spine. It is found in the early endosome membrane. The protein resides in the recycling endosome membrane. Its subcellular location is the synapse. The protein localises to the synaptosome. In terms of biological role, suppresses SRC activation by recognizing and binding to active SRC and facilitating PTPN13-mediated dephosphorylation of SRC 'Tyr-419' leading to its inactivation. Inactivated SRC dissociates from this protein allowing the initiation of a new SRC inactivation cycle. Involved in reorganization of the actin cytoskeleton. In nonmuscle cells, binds to ACTN1 (alpha-actinin-1), increases the affinity of ACTN1 to F-actin (filamentous actin), and promotes formation of actin stress fibers. Involved in regulation of the synaptic AMPA receptor transport in dendritic spines of hippocampal pyramidal neurons directing the receptors toward an insertion at the postsynaptic membrane. Links endosomal surface-internalized GRIA1-containing AMPA receptors to the alpha-actinin/actin cytoskeleton. Increases AMPA receptor-mediated excitatory postsynaptic currents in neurons. Its function is as follows. Involved in reorganization of the actin cytoskeleton and in regulation of cell migration. In response to oxidative stress, binds to NQO1, which stabilizes it and protects it from ubiquitin-independent degradation by the core 20S proteasome. Stabilized protein is able to heterodimerize with isoform 1 changing the subcellular location of it from cytoskeleton and nuclei to cytosol, leading to loss of isoforms 1 ability to induce formation of actin stress fibers. Counteracts the effects produced by isoform 1 on organization of actin cytoskeleton and cell motility to fine-tune actin cytoskeleton rearrangement and to attenuate cell migration. The sequence is that of PDZ and LIM domain protein 4 (PDLIM4) from Homo sapiens (Human).